Here is a 91-residue protein sequence, read N- to C-terminus: Small ribosomal subunit protein uS19 (91 aa).

The protein belongs to the universal ribosomal protein uS19 family.

Protein S19 forms a complex with S13 that binds strongly to the 16S ribosomal RNA. The protein is Small ribosomal subunit protein uS19 of Bordetella avium (strain 197N).